Here is a 348-residue protein sequence, read N- to C-terminus: D-alanine--D-alanine ligase (348 aa).

The ATP-grasp domain maps to 132–334; sequence KRILEVAGVP…YSDLIKELVV (203 aa). Residue 162 to 217 coordinates ATP; it reads LEKLTFPVFVKPANMGSSVGISKAENESELRSAIDLALKYDSRILIEQGVVAREIE. Residues D288, E301, and N303 each coordinate Mg(2+).

The protein belongs to the D-alanine--D-alanine ligase family. Requires Mg(2+) as cofactor. It depends on Mn(2+) as a cofactor.

The protein localises to the cytoplasm. It carries out the reaction 2 D-alanine + ATP = D-alanyl-D-alanine + ADP + phosphate + H(+). Its pathway is cell wall biogenesis; peptidoglycan biosynthesis. In terms of biological role, cell wall formation. The polypeptide is D-alanine--D-alanine ligase (Streptococcus thermophilus (strain ATCC BAA-491 / LMD-9)).